The primary structure comprises 409 residues: uncharacterized protein (409 aa).

A run of 10 helical transmembrane segments spans residues 22 to 42 (ILII…VIPA), 58 to 78 (LGII…VVGW), 99 to 119 (GILG…VFFI), 174 to 194 (FGAV…MYIA), 217 to 237 (NTAI…LIFA), 266 to 286 (SYIF…GPLA), 293 to 312 (FVIL…LPFA), 316 to 338 (LAYG…TVVY), 353 to 373 (LTVG…GALI), and 378 to 398 (LTPT…AFLL).

It belongs to the major facilitator superfamily.

It is found in the cell membrane. This is an uncharacterized protein from Bacillus subtilis (strain 168).